The primary structure comprises 94 residues: Selenoprotein K (94 aa).

Residues 20–42 (LSLITDFFWGIAEFVVLFFKTLL) form a helical membrane-spanning segment. Residues 48 to 94 (KRRSYGNSSDSRYDDGRGPPGNPPRRMGRINHLRGPSPPPMAGGUGR) are disordered. Residue U92 is a non-standard amino acid, selenocysteine.

It belongs to the selenoprotein K family. In terms of assembly, interacts with DERL1, DERL2, DERL3 and SELENOS. The SELENOK-SELENOS complex interacts with VCP. Interacts with ZDHHC6. In terms of processing, cleaved by CAPN2/m-calpain in resting macrophages but not in activated macrophages. Macrophage activation up-regulates expression of the calpain inhibitor CAST/calpastatin, resulting in inhibition of CAPN2 activity. Post-translationally, truncated SELENOK proteins produced by failed UGA/Sec decoding are ubiquitinated by the CRL2(KLHDC2) complex, which recognizes the diglycine (Gly-Gly) at the C-terminus of truncated SELENOK proteins. In terms of tissue distribution, highly expressed in heart.

Its subcellular location is the endoplasmic reticulum membrane. It localises to the cell membrane. Required for Ca(2+) flux in immune cells and plays a role in T-cell proliferation and in T-cell and neutrophil migration. Involved in endoplasmic reticulum-associated degradation (ERAD) of soluble glycosylated proteins. Required for palmitoylation and cell surface expression of CD36 and involved in macrophage uptake of low-density lipoprotein and in foam cell formation. Together with ZDHHC6, required for palmitoylation of ITPR1 in immune cells, leading to regulate ITPR1 stability and function. Plays a role in protection of cells from ER stress-induced apoptosis. Protects cells from oxidative stress when overexpressed in cardiomyocytes. The sequence is that of Selenoprotein K from Homo sapiens (Human).